A 311-amino-acid chain; its full sequence is MALIIRSEIDKATQAITTALPWRDYYELTKPKVVMLMLLTSLIGMLLATPSPAPLWLLVLGNLGIGLCAGAAAAVNHLVDRHVDVKMARTFHRPVANGRITPTNALLFSALLGGVGLWILSSFINALTAWLTLASLLGYAVIYTLFLKRATPQNIVIGGLAGAAPPLLGWTAVTGELDGHGLLLVLIIFAWTPPHFWALALYRKKEYAKAGIPMLPVTHGDSYTRLHIVLYTVILIAVTLLPFATRMMGYCYLVGALVLGAGFLYRALKLLVSKDPKQGLETFKFSIIYLMALFVVMLVDHYLFPIPVYGV.

9 consecutive transmembrane segments (helical) span residues V33–A53, L55–V75, N104–I124, L127–L147, I155–G175, G181–L201, I228–M248, Y252–V272, and I287–P307.

The protein belongs to the UbiA prenyltransferase family. Protoheme IX farnesyltransferase subfamily.

The protein localises to the cell inner membrane. It catalyses the reaction heme b + (2E,6E)-farnesyl diphosphate + H2O = Fe(II)-heme o + diphosphate. The protein operates within porphyrin-containing compound metabolism; heme O biosynthesis; heme O from protoheme: step 1/1. Converts heme B (protoheme IX) to heme O by substitution of the vinyl group on carbon 2 of heme B porphyrin ring with a hydroxyethyl farnesyl side group. This is Protoheme IX farnesyltransferase from Teredinibacter turnerae (strain ATCC 39867 / T7901).